Consider the following 83-residue polypeptide: Large ribosomal subunit protein uL23 (83 aa).

The protein belongs to the universal ribosomal protein uL23 family. As to quaternary structure, part of the 50S ribosomal subunit. Contacts protein L29.

In terms of biological role, binds to 23S rRNA. One of the proteins that surrounds the polypeptide exit tunnel on the outside of the ribosome. The protein is Large ribosomal subunit protein uL23 of Thermoplasma volcanium (strain ATCC 51530 / DSM 4299 / JCM 9571 / NBRC 15438 / GSS1).